A 122-amino-acid chain; its full sequence is Large ribosomal subunit protein uL14 (122 aa).

Belongs to the universal ribosomal protein uL14 family. In terms of assembly, part of the 50S ribosomal subunit. Forms a cluster with proteins L3 and L19. In the 70S ribosome, L14 and L19 interact and together make contacts with the 16S rRNA in bridges B5 and B8.

Functionally, binds to 23S rRNA. Forms part of two intersubunit bridges in the 70S ribosome. The protein is Large ribosomal subunit protein uL14 of Thermobifida fusca (strain YX).